A 437-amino-acid chain; its full sequence is Acyl-coenzyme A thioesterase 9, mitochondrial (437 aa).

Residues 1–21 constitute a mitochondrion transit peptide; it reads MRRAALRLCTLSKGLLAPSRG. HotDog ACOT-type domains are found at residues 84-207 and 287-399; these read SYIE…RDSE and ENSK…EKEV. Lys101 is modified (N6-acetyllysine).

It belongs to the acyl coenzyme A hydrolase family. Interacts with NYAP1, NYAP2 and MYO16.

It is found in the mitochondrion. The protein localises to the mitochondrion matrix. Its subcellular location is the mitochondrion inner membrane. The catalysed reaction is butanoyl-CoA + H2O = butanoate + CoA + H(+). It catalyses the reaction propanoyl-CoA + H2O = propanoate + CoA + H(+). It carries out the reaction hexadecanoyl-CoA + H2O = hexadecanoate + CoA + H(+). The enzyme catalyses octanoyl-CoA + H2O = octanoate + CoA + H(+). The catalysed reaction is decanoyl-CoA + H2O = decanoate + CoA + H(+). It catalyses the reaction tetradecanoyl-CoA + H2O = tetradecanoate + CoA + H(+). It carries out the reaction 4,8-dimethylnonanoyl-CoA + H2O = 4,8-dimethylnonanoate + CoA + H(+). The enzyme catalyses 3-methylbutanoyl-CoA + H2O = 3-methylbutanoate + CoA + H(+). The catalysed reaction is 2-methylpropanoyl-CoA + H2O = 2-methylpropanoate + CoA + H(+). It functions in the pathway lipid metabolism; fatty acid metabolism. Strongly inhibited by NADH and CoA. Mitochondrial acyl-CoA thioesterase. Catalyzes the hydrolysis of acyl-CoAs into free fatty acids and coenzyme A (CoA), regulating their respective intracellular levels. Regulates both mitochondrial lipid and amino acid metabolism. The chain is Acyl-coenzyme A thioesterase 9, mitochondrial (ACOT9) from Bos taurus (Bovine).